The primary structure comprises 187 residues: Lipid A acyltransferase PagP (187 aa).

Residues 1–26 (MIVAKKYFLVLSFLFVQFALLPQAFS) form the signal peptide. Catalysis depends on residues H59, D102, and S103.

The protein belongs to the lipid A palmitoyltransferase family. As to quaternary structure, homodimer.

The protein resides in the cell outer membrane. The catalysed reaction is a lipid A + a 1,2-diacyl-sn-glycero-3-phosphocholine = a hepta-acyl lipid A + a 2-acyl-sn-glycero-3-phosphocholine. It carries out the reaction a lipid IVA + a 1,2-diacyl-sn-glycero-3-phosphocholine = a lipid IVB + a 2-acyl-sn-glycero-3-phosphocholine. It catalyses the reaction a lipid IIA + a 1,2-diacyl-sn-glycero-3-phosphocholine = a lipid IIB + a 2-acyl-sn-glycero-3-phosphocholine. In terms of biological role, transfers a fatty acid residue from the sn-1 position of a phospholipid to the N-linked hydroxyfatty acid chain on the proximal unit of lipid A or its precursors. In Citrobacter koseri (strain ATCC BAA-895 / CDC 4225-83 / SGSC4696), this protein is Lipid A acyltransferase PagP.